The following is a 95-amino-acid chain: Small ribosomal subunit protein uS19 (95 aa).

It belongs to the universal ribosomal protein uS19 family.

Protein S19 forms a complex with S13 that binds strongly to the 16S ribosomal RNA. The chain is Small ribosomal subunit protein uS19 from Thermosipho melanesiensis (strain DSM 12029 / CIP 104789 / BI429).